We begin with the raw amino-acid sequence, 725 residues long: MTKSSGGGKCPIMHGSMTSEKKTNTHWWPNSLKLEILRQHDTKANPLDEDFNYAEEFKKINLEELKQDLKNFMTDSQEWWPADWGHYGGLMIRMAWHSAGSYRLADGRGGGGTGNQRFAPLNSWPDNVSLDKARRLLWPIKKKYGNKLSWADLFILAGNMAYESMGLKTFGFAGGREDIWHPEEDTYWGSEKEWLAETKNRYSSDEERDSLENPLAAVQMGLIYVNPEGVDGNPDPLRTAKDVRETFKRMAMNDEETCALTAGGHTVGKCHGNGKEENLGPEPEAADVEEQGMGWRNSGGKGVGRDTMSSGIEGAWTTNPTQWDNGYFYLLFNYEWELKKSPAGAWQWEPIDIKEEDKPVDVEDPSIRHNPIMTDADMAMKMDPDYRKIAEKFYKDPEYFADVFARAWFKLTHRDLGPKDRYLGADVPEEDLIWQDPIPKVDYSLSEQEIADLKEKLLNTELTSYELISTAWDSARNFRCSDFRGGANGARIRLAPQKDWHGNEPEKLHKVLRVLEDLQSTLDKKVSLADLIVLGGTAAVEKAAKDAGYNVTVPFAPGRGDATDEQTDVESFEPLEPLHDGYRNYLKKDYAVPAEELMLDRTHLMGLTAPEMTVLVGGMRALGANYGESEHGVFTDRVGTLTNDFFVNLTDMNNVWKKADDHYEVRDRKTDELKWTASRIDLVFGSNSILRSYSELYAQDDNQEKFVKDFVKAWTKVMNADRFDL.

A cross-link (tryptophyl-tyrosyl-methioninium (Trp-Tyr) (with M-250)) is located at residues 96-224 (WHSAGSYRLA…LAAVQMGLIY (129 aa)). His-97 (proton acceptor) is an active-site residue. Residues 224–250 (YVNPEGVDGNPDPLRTAKDVRETFKRM) constitute a cross-link (tryptophyl-tyrosyl-methioninium (Tyr-Met) (with W-96)). Position 265 (His-265) interacts with heme b.

Belongs to the peroxidase family. Peroxidase/catalase subfamily. In terms of assembly, homodimer or homotetramer. The cofactor is heme b. In terms of processing, formation of the three residue Trp-Tyr-Met cross-link is important for the catalase, but not the peroxidase activity of the enzyme.

It catalyses the reaction H2O2 + AH2 = A + 2 H2O. The enzyme catalyses 2 H2O2 = O2 + 2 H2O. Functionally, bifunctional enzyme with both catalase and broad-spectrum peroxidase activity. The chain is Catalase-peroxidase 1 from Idiomarina loihiensis (strain ATCC BAA-735 / DSM 15497 / L2-TR).